The sequence spans 88 residues: Small ribosomal subunit protein uS17 (88 aa).

Belongs to the universal ribosomal protein uS17 family. Part of the 30S ribosomal subunit.

One of the primary rRNA binding proteins, it binds specifically to the 5'-end of 16S ribosomal RNA. In Brevibacillus brevis (strain 47 / JCM 6285 / NBRC 100599), this protein is Small ribosomal subunit protein uS17.